Reading from the N-terminus, the 300-residue chain is Ribonuclease HIII (300 aa).

Residues 83-300 (IPIIGSDEVG…THKAQALLTK (218 aa)) enclose the RNase H type-2 domain. 3 residues coordinate a divalent metal cation: Asp89, Glu90, and Asp194.

The protein belongs to the RNase HII family. RnhC subfamily. It depends on Mn(2+) as a cofactor. Mg(2+) is required as a cofactor.

The protein localises to the cytoplasm. The enzyme catalyses Endonucleolytic cleavage to 5'-phosphomonoester.. Its function is as follows. Endonuclease that specifically degrades the RNA of RNA-DNA hybrids. The sequence is that of Ribonuclease HIII from Streptococcus pyogenes serotype M1.